The following is an 889-amino-acid chain: Valine--tRNA ligase (889 aa).

The 'HIGH' region motif lies at 50 to 60 (PNVTGKLHLGH). The short motif at 532-536 (KMSKS) is the 'KMSKS' region element. Lysine 535 contacts ATP. Residues 816-889 (LAELVDLDEE…QRLVDIKAEA (74 aa)) adopt a coiled-coil conformation.

It belongs to the class-I aminoacyl-tRNA synthetase family. ValS type 1 subfamily. Monomer.

Its subcellular location is the cytoplasm. It carries out the reaction tRNA(Val) + L-valine + ATP = L-valyl-tRNA(Val) + AMP + diphosphate. Catalyzes the attachment of valine to tRNA(Val). As ValRS can inadvertently accommodate and process structurally similar amino acids such as threonine, to avoid such errors, it has a 'posttransfer' editing activity that hydrolyzes mischarged Thr-tRNA(Val) in a tRNA-dependent manner. The chain is Valine--tRNA ligase from Lactiplantibacillus plantarum (strain ATCC BAA-793 / NCIMB 8826 / WCFS1) (Lactobacillus plantarum).